The following is a 180-amino-acid chain: Meiotic recombination protein rec15 (180 aa).

Homomer. Interacts (via C-terminus) with hop1 (via C-terminus); the interaction is direct. Interacts (via C-terminus) with rec10; the interaction is direct. Interacts with mde2; the interaction is direct.

It is found in the nucleus. It localises to the chromosome. Its function is as follows. Required during the early stages of meiosis for meiotic recombination. This Schizosaccharomyces pombe (strain 972 / ATCC 24843) (Fission yeast) protein is Meiotic recombination protein rec15.